A 343-amino-acid polypeptide reads, in one-letter code: MAASEAPPFWWEKPDWRAWALWPLSSAYGFAASARLRAAKREKIPAAVLCIGNLTVGGEGKTPIAIALARHAMRKGLTVGFLSRGYGGSHFKPHIVSPEDDSARAVGDEPLLLARQALTVISRDRAAGARRLVQAGCNLIIMDDGFQSARLHMDYALIVVDAMRGLGNGHVFPAGPMRAPLTEQMRFADGVVTMGEGDAADIVVRSASRAGRPVYSARIRPRSRNGLKGKRVLAFAGIGNPRKFYATLKACGADIVLERSFPDHHLFTEEDVSELSREAAKESLLLVTTEKDFVRLQNSMQPMRDFAASVQALKVEAVFDEPGAPDAIINAAQQAWRERMLKR.

55-62 serves as a coordination point for ATP; sequence TVGGEGKT.

The protein belongs to the LpxK family.

The catalysed reaction is a lipid A disaccharide + ATP = a lipid IVA + ADP + H(+). Its pathway is glycolipid biosynthesis; lipid IV(A) biosynthesis; lipid IV(A) from (3R)-3-hydroxytetradecanoyl-[acyl-carrier-protein] and UDP-N-acetyl-alpha-D-glucosamine: step 6/6. Transfers the gamma-phosphate of ATP to the 4'-position of a tetraacyldisaccharide 1-phosphate intermediate (termed DS-1-P) to form tetraacyldisaccharide 1,4'-bis-phosphate (lipid IVA). The polypeptide is Tetraacyldisaccharide 4'-kinase (Chelativorans sp. (strain BNC1)).